The following is a 514-amino-acid chain: Multifunctional alkaline phosphatase superfamily protein PehA (514 aa).

Mn(2+) is bound by residues aspartate 12, cysteine 57, aspartate 324, and histidine 325. Cysteine 57 functions as the Nucleophile in the catalytic mechanism. Residue cysteine 57 is modified to 3-oxoalanine (Cys).

The protein belongs to the alkaline phosphatase superfamily. As to quaternary structure, homotetramer. The cofactor is Mn(2+). In terms of processing, the conversion to 3-oxoalanine (also known as C-formylglycine, FGly), of a serine or cysteine residue in prokaryotes and of a cysteine residue in eukaryotes, is critical for catalytic activity. Phosphate triester hydrolytic activity is retained with unmodified cysteine acting as a nucleophile.

Anions including Cl(-) and CH3COO(-), and SO4(2-) salts stimulate activity 20-40% at 100 mM. In terms of biological role, hydrolytic enzyme with a broad substrate specificity acting on phosphate diesters and phosphonate monoesters. Hydrolyzes phosphate mono- and triesters, sulfate monoesters and sulfonate monoesters. Hydrolyzes glyphosate monoesters. Does not hydrolyze DNA or cGMP. Hydrolyzes glyceryl glyphosate, but this substrate has a much lower affinity than the glyphosate monoesters. The polypeptide is Multifunctional alkaline phosphatase superfamily protein PehA (Trinickia caryophylli (Paraburkholderia caryophylli)).